A 115-amino-acid chain; its full sequence is U3-lycotoxin-Ls1d (115 aa).

The signal sequence occupies residues 1 to 20; the sequence is MKFVLLFGVLLVTLFSYSSA. Positions 21 to 44 are excised as a propeptide; it reads EMLDDFDQADEDELLSLIEKEEAR. Disulfide bonds link cysteine 48/cysteine 63, cysteine 55/cysteine 72, cysteine 62/cysteine 87, and cysteine 74/cysteine 85.

The protein belongs to the neurotoxin 19 (CSTX) family. 01 subfamily. Expressed by the venom gland.

The protein localises to the secreted. This chain is U3-lycotoxin-Ls1d, found in Lycosa singoriensis (Wolf spider).